We begin with the raw amino-acid sequence, 217 residues long: Uracil-DNA glycosylase (217 aa).

The active-site Proton acceptor is Asp62.

This sequence belongs to the uracil-DNA glycosylase (UDG) superfamily. UNG family.

It is found in the cytoplasm. The enzyme catalyses Hydrolyzes single-stranded DNA or mismatched double-stranded DNA and polynucleotides, releasing free uracil.. Functionally, excises uracil residues from the DNA which can arise as a result of misincorporation of dUMP residues by DNA polymerase or due to deamination of cytosine. The polypeptide is Uracil-DNA glycosylase (Streptococcus pneumoniae (strain P1031)).